The chain runs to 448 residues: Phosphoglucosamine mutase (448 aa).

Serine 100 (phosphoserine intermediate) is an active-site residue. Mg(2+) is bound by residues serine 100, aspartate 240, aspartate 242, and aspartate 244. At serine 100 the chain carries Phosphoserine.

This sequence belongs to the phosphohexose mutase family. As to quaternary structure, homodimer, may form a complex with CdaA. It depends on Mg(2+) as a cofactor. Activated by phosphorylation.

The enzyme catalyses alpha-D-glucosamine 1-phosphate = D-glucosamine 6-phosphate. Catalyzes the conversion of glucosamine-6-phosphate to glucosamine-1-phosphate. Glucosamine-1-phosphate is used for cell wall biosynthesis. The sequence is that of Phosphoglucosamine mutase from Bacillus subtilis (strain 168).